Here is a 222-residue protein sequence, read N- to C-terminus: Protein-L-isoaspartate O-methyltransferase (222 aa).

Residue Ser68 is part of the active site.

It belongs to the methyltransferase superfamily. L-isoaspartyl/D-aspartyl protein methyltransferase family.

The protein resides in the cytoplasm. The enzyme catalyses [protein]-L-isoaspartate + S-adenosyl-L-methionine = [protein]-L-isoaspartate alpha-methyl ester + S-adenosyl-L-homocysteine. Its function is as follows. Catalyzes the methyl esterification of L-isoaspartyl residues in peptides and proteins that result from spontaneous decomposition of normal L-aspartyl and L-asparaginyl residues. It plays a role in the repair and/or degradation of damaged proteins. The chain is Protein-L-isoaspartate O-methyltransferase from Koribacter versatilis (strain Ellin345).